An 831-amino-acid polypeptide reads, in one-letter code: Phenylalanine--tRNA ligase beta subunit (831 aa).

A tRNA-binding domain is found at Ala42–Asp157. The B5 domain occupies Val408–Ala483. Asp461, Asp467, Glu470, and Glu471 together coordinate Mg(2+). The FDX-ACB domain occupies Ser737–Arg830.

This sequence belongs to the phenylalanyl-tRNA synthetase beta subunit family. Type 1 subfamily. As to quaternary structure, tetramer of two alpha and two beta subunits. It depends on Mg(2+) as a cofactor.

It localises to the cytoplasm. The enzyme catalyses tRNA(Phe) + L-phenylalanine + ATP = L-phenylalanyl-tRNA(Phe) + AMP + diphosphate + H(+). In Thermobifida fusca (strain YX), this protein is Phenylalanine--tRNA ligase beta subunit.